The chain runs to 225 residues: Small ribosomal subunit protein uS3 (225 aa).

In terms of domain architecture, KH type-2 spans 18 to 87; that stretch reads VDEYLAKQFY…NPQITVTSVE (70 aa).

Belongs to the universal ribosomal protein uS3 family. Part of the 30S ribosomal subunit.

Binds the lower part of the 30S subunit head. The polypeptide is Small ribosomal subunit protein uS3 (Sulfurisphaera tokodaii (strain DSM 16993 / JCM 10545 / NBRC 100140 / 7) (Sulfolobus tokodaii)).